We begin with the raw amino-acid sequence, 378 residues long: Ribosomal RNA large subunit methyltransferase G (378 aa).

It belongs to the methyltransferase superfamily. RlmG family.

It localises to the cytoplasm. It catalyses the reaction guanosine(1835) in 23S rRNA + S-adenosyl-L-methionine = N(2)-methylguanosine(1835) in 23S rRNA + S-adenosyl-L-homocysteine + H(+). Specifically methylates the guanine in position 1835 (m2G1835) of 23S rRNA. This Shewanella sp. (strain W3-18-1) protein is Ribosomal RNA large subunit methyltransferase G.